The following is a 719-amino-acid chain: MINSIIKTIDLGDGRTITLETGKLAKQADGAIVLRMNNTMILATVCVAKDTNPCVDFLPLQVEYKEKFSAFGRFPGGFTKREGRASDYEILTCRLIDRTLRPLFPRDYHSEVFVNIILFSSDGEDIPDALAGLAASAALSVSTIPFNGPISEVRVARIDGKFKINPTFGELAKADMDIMVGATADNIMMVEGEMNEVSEEEMLEAIKAAHEAIKPQCKAQIELARIVGTTIKNTYSHEVNDEELRSDIKTKLYDKVYAVAKSGQCKNKRIEAFQTIIEEYKKQFKEKELSEEKIFLIKRYYYEIEKEVMRRCILDENIRIDGRKTTEIRPIWSEVNPITGPHGSAIFTRGETQALATVTLGTKLNEKIIDDVLINDKERFLLHYNFPPFATGEARAQRGIGRREIGHGNLAHRALKPIIPNNYPYVIRVVSDILESNGSSSMATVCAGTLSLMDAGVQIKRPVSGIAMGLIFEKEGSKYAILSDILGDEDHLGDMDFKVAGTKKGITATQMDIKIDGLSYEVLERALSQAKQGREYILDKMLETIPEPRTDLKPHTPKIEIIIIPKEFIGSVIGPGGKIIQRLQEETGTTITIEEIEKMGRIEIFGDNKKSIDAALTRIKGIVSVPEVGEIYEGKIRSIMPYGAFIEFLPGKEGLLHISEISWKHLESIEEAGLNEGDFIKIKLVDIDSKTGKFKLSHKILLPHSEKYTAIRREQHEKI.

Asp490 and Asp496 together coordinate Mg(2+). In terms of domain architecture, KH spans 557–619 (PKIEIIIIPK…KSIDAALTRI (63 aa)). The 71-residue stretch at 629-699 (GEIYEGKIRS…KTGKFKLSHK (71 aa)) folds into the S1 motif domain.

The protein belongs to the polyribonucleotide nucleotidyltransferase family. The cofactor is Mg(2+).

It is found in the cytoplasm. The catalysed reaction is RNA(n+1) + phosphate = RNA(n) + a ribonucleoside 5'-diphosphate. Its function is as follows. Involved in mRNA degradation. Catalyzes the phosphorolysis of single-stranded polyribonucleotides processively in the 3'- to 5'-direction. The protein is Polyribonucleotide nucleotidyltransferase of Azobacteroides pseudotrichonymphae genomovar. CFP2.